A 443-amino-acid polypeptide reads, in one-letter code: Ribosomal protein uS12 methylthiotransferase RimO (443 aa).

One can recognise an MTTase N-terminal domain in the interval 5–115; that stretch reads PNIGFISLGC…VMKHVHKYVP (111 aa). Residues Cys-14, Cys-50, Cys-79, Cys-147, Cys-151, and Cys-154 each contribute to the [4Fe-4S] cluster site. The 242-residue stretch at 133–374 folds into the Radical SAM core domain; the sequence is LTPKHYAYLK…MQVQQRISAA (242 aa). One can recognise a TRAM domain in the interval 377–443; that stretch reads QQKVGKTLAV…ADEYDLWGTC (67 aa).

It belongs to the methylthiotransferase family. RimO subfamily. Requires [4Fe-4S] cluster as cofactor.

It localises to the cytoplasm. The enzyme catalyses L-aspartate(89)-[ribosomal protein uS12]-hydrogen + (sulfur carrier)-SH + AH2 + 2 S-adenosyl-L-methionine = 3-methylsulfanyl-L-aspartate(89)-[ribosomal protein uS12]-hydrogen + (sulfur carrier)-H + 5'-deoxyadenosine + L-methionine + A + S-adenosyl-L-homocysteine + 2 H(+). Functionally, catalyzes the methylthiolation of an aspartic acid residue of ribosomal protein uS12. The polypeptide is Ribosomal protein uS12 methylthiotransferase RimO (Actinobacillus pleuropneumoniae serotype 5b (strain L20)).